The chain runs to 170 residues: Myelin-associated oligodendrocyte basic protein (170 aa).

Residues 69–170 (SRRATSPQRP…GSPTRAPRFW (102 aa)) form a disordered region. A compositionally biased stretch (low complexity) spans 82-92 (PAASPVVVRAP). Residues serine 85, serine 98, and serine 107 each carry the phosphoserine modification. Repeat copies occupy residues 93-101 (PAKPKSPLM) and 105-110 (PRSPPR). A 3 X 9 AA approximate tandem repeats region spans residues 93–115 (PAKPKSPLMPAKPRSPPRPAKPR). The stretch at 111 to 115 (PAKPR) is one 3; half-length repeat. Residues 118-130 (SRTERQPRPRPEV) show a composition bias toward basic and acidic residues. Residues 138–151 (KPPQKSKQPARSSP) show a composition bias toward low complexity.

The protein localises to the cytoplasm. It localises to the perinuclear region. Functionally, may play a role in compacting or stabilizing the myelin sheath possibly by binding the negatively charged acidic phospholipids of the cytoplasmic membrane. This Mus musculus (Mouse) protein is Myelin-associated oligodendrocyte basic protein (Mobp).